The sequence spans 421 residues: Testin (421 aa).

A PET domain is found at 92-199 (MILTNPVPAK…GDVKLPSEMD (108 aa)). Residues 135–165 (QPVAGSEGAQYRKKQLAKQLPEHDQDPSKCH) are disordered. Over residues 154–165 (LPEHDQDPSKCH) the composition is skewed to basic and acidic residues. LIM zinc-binding domains lie at 234–297 (YSCY…CDSE), 299–359 (PRCA…NHAV), and 362–421 (QGCH…KMMS).

Belongs to the prickle / espinas / testin family. Interacts via LIM domain 1 with ZYX. Interacts (via LIM domain 3) with ENAH and VASP. Interacts with ALKBH4, talin, actin, alpha-actinin, GRIP1 and PXN. Interacts (via LIM domain 2) with ACTL7A (via N-terminus). Heterodimer with ACTL7A; the heterodimer interacts with ENAH to form a heterotrimer.

It localises to the cytoplasm. Its subcellular location is the cell junction. The protein resides in the focal adhesion. Scaffold protein that may play a role in cell adhesion, cell spreading and in the reorganization of the actin cytoskeleton. Plays a role in the regulation of cell proliferation. May act as a tumor suppressor. The chain is Testin (TES) from Dasypus novemcinctus (Nine-banded armadillo).